We begin with the raw amino-acid sequence, 449 residues long: UDP-N-acetylglucosamine 1-carboxyvinyltransferase (449 aa).

51-52 (KN) is a binding site for phosphoenolpyruvate. Residue R121 coordinates UDP-N-acetyl-alpha-D-glucosamine. C145 (proton donor) is an active-site residue. A 2-(S-cysteinyl)pyruvic acid O-phosphothioketal modification is found at C145. UDP-N-acetyl-alpha-D-glucosamine is bound by residues 150–154 (RPVDQ), D333, and I355.

It belongs to the EPSP synthase family. MurA subfamily.

The protein localises to the cytoplasm. It catalyses the reaction phosphoenolpyruvate + UDP-N-acetyl-alpha-D-glucosamine = UDP-N-acetyl-3-O-(1-carboxyvinyl)-alpha-D-glucosamine + phosphate. The protein operates within cell wall biogenesis; peptidoglycan biosynthesis. In terms of biological role, cell wall formation. Adds enolpyruvyl to UDP-N-acetylglucosamine. The protein is UDP-N-acetylglucosamine 1-carboxyvinyltransferase of Burkholderia mallei (strain ATCC 23344).